Reading from the N-terminus, the 346-residue chain is Anthranilate phosphoribosyltransferase (346 aa).

Residues Gly-81, 84–85 (GD), 91–94 (NVST), 109–117 (KHGNRSVSS), and Ser-121 contribute to the 5-phospho-alpha-D-ribose 1-diphosphate site. Gly-81 lines the anthranilate pocket. Ser-93 is a binding site for Mg(2+). Residue Asn-112 coordinates anthranilate. An anthranilate-binding site is contributed by Arg-167. Residues Asp-226 and Glu-227 each contribute to the Mg(2+) site.

This sequence belongs to the anthranilate phosphoribosyltransferase family. Homodimer. It depends on Mg(2+) as a cofactor.

The catalysed reaction is N-(5-phospho-beta-D-ribosyl)anthranilate + diphosphate = 5-phospho-alpha-D-ribose 1-diphosphate + anthranilate. It functions in the pathway amino-acid biosynthesis; L-tryptophan biosynthesis; L-tryptophan from chorismate: step 2/5. Its function is as follows. Catalyzes the transfer of the phosphoribosyl group of 5-phosphorylribose-1-pyrophosphate (PRPP) to anthranilate to yield N-(5'-phosphoribosyl)-anthranilate (PRA). This Hahella chejuensis (strain KCTC 2396) protein is Anthranilate phosphoribosyltransferase.